The sequence spans 347 residues: Bifunctional methylenetetrahydrofolate dehydrogenase/cyclohydrolase 2, mitochondrial (347 aa).

Substrate contacts are provided by residues 98–102 (YVRNK) and 145–147 (VQL). NAD(+) is bound by residues 214-216 (GRS) and R247. Position 323 to 327 (323 to 327 (PGGVG)) interacts with substrate.

This sequence belongs to the tetrahydrofolate dehydrogenase/cyclohydrolase family. Requires Mg(2+) as cofactor. As to expression, isoform 1, isoform 4 and isoform 5 are expressed in brain and placenta.

The protein resides in the mitochondrion inner membrane. It carries out the reaction (6R)-5,10-methylene-5,6,7,8-tetrahydrofolate + NAD(+) = (6R)-5,10-methenyltetrahydrofolate + NADH. The catalysed reaction is (6R)-5,10-methenyltetrahydrofolate + H2O = (6R)-10-formyltetrahydrofolate + H(+). The enzyme catalyses (6R)-5,10-methylene-5,6,7,8-tetrahydrofolate + NADP(+) = (6R)-5,10-methenyltetrahydrofolate + NADPH. It participates in one-carbon metabolism; tetrahydrofolate interconversion. Functionally, bifunctional mitochondrial folate-interconverting enzyme that has both NAD/NADP-dependent methylenetetrahydrofolate dehydrogenase and methenyltetrahydrofolate cyclohydrolase activities. The protein is Bifunctional methylenetetrahydrofolate dehydrogenase/cyclohydrolase 2, mitochondrial of Homo sapiens (Human).